Consider the following 433-residue polypeptide: Trigger factor (433 aa).

The region spanning 163–248 (GNFVVIDFVG…VKEAKVKELP (86 aa)) is the PPIase FKBP-type domain.

Belongs to the FKBP-type PPIase family. Tig subfamily.

It is found in the cytoplasm. It carries out the reaction [protein]-peptidylproline (omega=180) = [protein]-peptidylproline (omega=0). In terms of biological role, involved in protein export. Acts as a chaperone by maintaining the newly synthesized protein in an open conformation. Functions as a peptidyl-prolyl cis-trans isomerase. The protein is Trigger factor of Geobacter metallireducens (strain ATCC 53774 / DSM 7210 / GS-15).